A 578-amino-acid chain; its full sequence is Isocitrate dehydrogenase kinase/phosphatase (578 aa).

ATP is bound by residues 315–321 and Lys-336; that span reads APGIRGM. Asp-371 is a catalytic residue.

The protein belongs to the AceK family.

It is found in the cytoplasm. It carries out the reaction L-seryl-[isocitrate dehydrogenase] + ATP = O-phospho-L-seryl-[isocitrate dehydrogenase] + ADP + H(+). Bifunctional enzyme which can phosphorylate or dephosphorylate isocitrate dehydrogenase (IDH) on a specific serine residue. This is a regulatory mechanism which enables bacteria to bypass the Krebs cycle via the glyoxylate shunt in response to the source of carbon. When bacteria are grown on glucose, IDH is fully active and unphosphorylated, but when grown on acetate or ethanol, the activity of IDH declines drastically concomitant with its phosphorylation. This chain is Isocitrate dehydrogenase kinase/phosphatase, found in Escherichia coli O17:K52:H18 (strain UMN026 / ExPEC).